Consider the following 121-residue polypeptide: MSDILDEIVIEDVVANCPQEFLQYHKCIRDNEENPGKCKDGRMILSTCIREKVPSVKSIMSECSEPMKKYDQCIRDNMGTRTINENCLGFLQDLRKCAELQVKNKNIKPSINGVNLELIKD.

CHCH domains lie at 14-56 (VANC…VPSV) and 60-105 (MSEC…VKNK). Short sequence motifs (cx9C motif) lie at residues 17–27 (CPQEFLQYHKC), 38–48 (CKDGRMILSTC), 63–73 (CSEPMKKYDQC), and 87–97 (CLGFLQDLRKC). Disulfide bonds link C17/C48, C27/C38, C63/C97, and C73/C87.

The protein resides in the mitochondrion intermembrane space. The polypeptide is Mitochondrial intermembrane space cysteine motif-containing protein MIX14 (MIX14) (Saccharomyces cerevisiae (strain ATCC 204508 / S288c) (Baker's yeast)).